Reading from the N-terminus, the 348-residue chain is NADH-quinone oxidoreductase subunit H (348 aa).

The next 8 membrane-spanning stretches (helical) occupy residues 7 to 27, 82 to 102, 115 to 135, 161 to 181, 199 to 219, 251 to 271, 287 to 307, and 322 to 342; these read IWLLPLLIIVGKTLLLLVVLL, GVFLLAPFVSATLALSTWAVI, VGLLYILAISSLEVYGVIMGG, IGFVLVTVILVSGSLDLTTIV, FLDWNWLVLFPMFIIFFISAL, LFFLGEYVAIVLMCALTTILF, VPGIIWFVLKVCFVFFWFAMV, and LGWKVFLPFSLAMVVITATFL.

Belongs to the complex I subunit 1 family. NDH-1 is composed of 14 different subunits. Subunits NuoA, H, J, K, L, M, N constitute the membrane sector of the complex.

The protein localises to the cell inner membrane. It catalyses the reaction a quinone + NADH + 5 H(+)(in) = a quinol + NAD(+) + 4 H(+)(out). In terms of biological role, NDH-1 shuttles electrons from NADH, via FMN and iron-sulfur (Fe-S) centers, to quinones in the respiratory chain. The immediate electron acceptor for the enzyme in this species is believed to be ubiquinone. Couples the redox reaction to proton translocation (for every two electrons transferred, four hydrogen ions are translocated across the cytoplasmic membrane), and thus conserves the redox energy in a proton gradient. This subunit may bind ubiquinone. The protein is NADH-quinone oxidoreductase subunit H of Bartonella quintana (strain Toulouse) (Rochalimaea quintana).